We begin with the raw amino-acid sequence, 187 residues long: Large ribosomal subunit protein bL17 (187 aa).

This sequence belongs to the bacterial ribosomal protein bL17 family. Part of the 50S ribosomal subunit. Contacts protein L32.

In Rhodococcus opacus (strain B4), this protein is Large ribosomal subunit protein bL17.